The chain runs to 119 residues: Holo-[acyl-carrier-protein] synthase (119 aa).

The Mg(2+) site is built by aspartate 8 and glutamate 53.

This sequence belongs to the P-Pant transferase superfamily. AcpS family. Requires Mg(2+) as cofactor.

It is found in the cytoplasm. The enzyme catalyses apo-[ACP] + CoA = holo-[ACP] + adenosine 3',5'-bisphosphate + H(+). Transfers the 4'-phosphopantetheine moiety from coenzyme A to a Ser of acyl-carrier-protein. In Petrotoga mobilis (strain DSM 10674 / SJ95), this protein is Holo-[acyl-carrier-protein] synthase.